Here is a 312-residue protein sequence, read N- to C-terminus: Methionyl-tRNA formyltransferase (312 aa).

109–112 (SLLP) lines the (6S)-5,6,7,8-tetrahydrofolate pocket.

The protein belongs to the Fmt family.

It carries out the reaction L-methionyl-tRNA(fMet) + (6R)-10-formyltetrahydrofolate = N-formyl-L-methionyl-tRNA(fMet) + (6S)-5,6,7,8-tetrahydrofolate + H(+). In terms of biological role, attaches a formyl group to the free amino group of methionyl-tRNA(fMet). The formyl group appears to play a dual role in the initiator identity of N-formylmethionyl-tRNA by promoting its recognition by IF2 and preventing the misappropriation of this tRNA by the elongation apparatus. The chain is Methionyl-tRNA formyltransferase from Anaeromyxobacter dehalogenans (strain 2CP-C).